The chain runs to 152 residues: Ribosome maturation factor RimP (152 aa).

This sequence belongs to the RimP family.

Its subcellular location is the cytoplasm. In terms of biological role, required for maturation of 30S ribosomal subunits. The chain is Ribosome maturation factor RimP from Clostridium beijerinckii (strain ATCC 51743 / NCIMB 8052) (Clostridium acetobutylicum).